The chain runs to 501 residues: Probable cytochrome P450 6t3 (501 aa).

A heme-binding site is contributed by C444.

This sequence belongs to the cytochrome P450 family. Requires heme as cofactor.

The protein resides in the endoplasmic reticulum membrane. The protein localises to the microsome membrane. May be involved in the metabolism of insect hormones and in the breakdown of synthetic insecticides. The sequence is that of Probable cytochrome P450 6t3 (Cyp6t3) from Drosophila melanogaster (Fruit fly).